The sequence spans 256 residues: Ribonuclease 3 (256 aa).

The RNase III domain occupies 3–125 (LDALQQRLGY…IFGAVFLDGG (123 aa)). Residue E38 coordinates Mg(2+). Residue D42 is part of the active site. Mg(2+) contacts are provided by D111 and E114. E114 is an active-site residue. The 71-residue stretch at 152-222 (DAKTLLQEYL…AKLALDEAHR (71 aa)) folds into the DRBM domain. A disordered region spans residues 226-256 (QLVKRSRAERTGKTRKQATPPDPQLSLRLKE).

Belongs to the ribonuclease III family. In terms of assembly, homodimer. It depends on Mg(2+) as a cofactor.

The protein localises to the cytoplasm. The catalysed reaction is Endonucleolytic cleavage to 5'-phosphomonoester.. Functionally, digests double-stranded RNA. Involved in the processing of primary rRNA transcript to yield the immediate precursors to the large and small rRNAs (23S and 16S). Processes some mRNAs, and tRNAs when they are encoded in the rRNA operon. Processes pre-crRNA and tracrRNA of type II CRISPR loci if present in the organism. The chain is Ribonuclease 3 from Ralstonia pickettii (strain 12J).